Reading from the N-terminus, the 160-residue chain is Putative pre-16S rRNA nuclease (160 aa).

It belongs to the YqgF nuclease family.

It localises to the cytoplasm. In terms of biological role, could be a nuclease involved in processing of the 5'-end of pre-16S rRNA. The chain is Putative pre-16S rRNA nuclease from Chelativorans sp. (strain BNC1).